The chain runs to 443 residues: Phosphoglucosamine mutase (443 aa).

The Phosphoserine intermediate role is filled by S102. Residues S102, D241, D243, and D245 each coordinate Mg(2+). The residue at position 102 (S102) is a Phosphoserine.

Belongs to the phosphohexose mutase family. Mg(2+) serves as cofactor. Post-translationally, activated by phosphorylation.

The catalysed reaction is alpha-D-glucosamine 1-phosphate = D-glucosamine 6-phosphate. Its function is as follows. Catalyzes the conversion of glucosamine-6-phosphate to glucosamine-1-phosphate. This is Phosphoglucosamine mutase from Polaromonas sp. (strain JS666 / ATCC BAA-500).